A 291-amino-acid polypeptide reads, in one-letter code: Lectin (291 aa).

The N-terminal stretch at 1-28 (MGISKKSQLVPLLAFITMFLMVVSRVSS) is a signal peptide. Residue aspartate 118 participates in Ca(2+) binding. An a carbohydrate-binding site is contributed by arginine 138. The propeptide at 147–162 (NIIKNSTNLDFNAAYN) is removed in mature form. 2 residues coordinate Mn(2+): glutamate 170 and aspartate 172. Aspartate 172, tyrosine 174, asparagine 176, and aspartate 181 together coordinate Ca(2+). Tyrosine 174 lines the a carbohydrate pocket. Residues aspartate 181 and histidine 186 each coordinate Mn(2+). Lysine 208 is a Ca(2+) binding site. An a carbohydrate-binding site is contributed by serine 228. The propeptide at 281–291 (QLQDLRIASVV) is removed in mature form.

It belongs to the leguminous lectin family. The mature chain consists of residues 163-280 followed by residues 29-147. Concanavalin A-like lectins of the Diocleinae subtribe undergo proteolytic processing referred to as circular permutation. The propeptide is split into an N-terminal and a C-terminal part, the gamma and beta chain, respectively. These are then religated in beta-gamma order to form the mature alpha chain. The beta and gamma chains can often be detected in cell extracts.

Its function is as follows. D-mannose-binding lectin that also binds alpha-methyl-D-mannoside with even higher affinity. Has hemagglutinating activity against rabbit erythrocytes. Shows toxicity against the brine shrimp A.nauplii. Induces reversible paw edema and hypernociceptivity in rats. This chain is Lectin, found in Dioclea lasiophylla.